The sequence spans 125 residues: Glycine cleavage system H protein (125 aa).

The 83-residue stretch at 23-105 folds into the Lipoyl-binding domain; it reads VSTVGITEHA…FEGGWLFKVR (83 aa). N6-lipoyllysine is present on lysine 64.

Belongs to the GcvH family. As to quaternary structure, the glycine cleavage system is composed of four proteins: P, T, L and H. (R)-lipoate is required as a cofactor.

Its function is as follows. The glycine cleavage system catalyzes the degradation of glycine. The H protein shuttles the methylamine group of glycine from the P protein to the T protein. The protein is Glycine cleavage system H protein of Streptomyces avermitilis (strain ATCC 31267 / DSM 46492 / JCM 5070 / NBRC 14893 / NCIMB 12804 / NRRL 8165 / MA-4680).